The following is a 541-amino-acid chain: Chaperonin GroEL (541 aa).

ATP-binding positions include 29-32 (TLGP), 86-90 (DGTTT), Gly-413, and Asp-495.

As to quaternary structure, forms a cylinder of 14 subunits composed of two heptameric rings stacked back-to-back. Interacts with the co-chaperonin GroES.

It localises to the cytoplasm. The enzyme catalyses ATP + H2O + a folded polypeptide = ADP + phosphate + an unfolded polypeptide.. In terms of biological role, together with its co-chaperonin GroES, plays an essential role in assisting protein folding. The GroEL-GroES system forms a nano-cage that allows encapsulation of the non-native substrate proteins and provides a physical environment optimized to promote and accelerate protein folding. In Thermoanaerobacter brockii (Thermoanaerobium brockii), this protein is Chaperonin GroEL.